The chain runs to 439 residues: Ribosomal protein uS12 methylthiotransferase RimO (439 aa).

One can recognise an MTTase N-terminal domain in the interval 2–114; it reads SKLYLMSLGC…VDEMILKKTN (113 aa). The [4Fe-4S] cluster site is built by cysteine 11, cysteine 45, cysteine 77, cysteine 146, cysteine 150, and cysteine 153. Residues 132-363 form the Radical SAM core domain; the sequence is TGSNSHAFIK…VNEVIEKSFE (232 aa).

It belongs to the methylthiotransferase family. RimO subfamily. [4Fe-4S] cluster is required as a cofactor.

It is found in the cytoplasm. The enzyme catalyses L-aspartate(89)-[ribosomal protein uS12]-hydrogen + (sulfur carrier)-SH + AH2 + 2 S-adenosyl-L-methionine = 3-methylsulfanyl-L-aspartate(89)-[ribosomal protein uS12]-hydrogen + (sulfur carrier)-H + 5'-deoxyadenosine + L-methionine + A + S-adenosyl-L-homocysteine + 2 H(+). Its function is as follows. Catalyzes the methylthiolation of an aspartic acid residue of ribosomal protein uS12. This is Ribosomal protein uS12 methylthiotransferase RimO from Campylobacter jejuni (strain RM1221).